Consider the following 362-residue polypeptide: MSMPFRVLGIETSCDETAAAVVEPAADGRGGRIMAEALLSQVEEHRPYGGVVPEIAARSHLDHVDSLVIRALGEAGLTVHDIDAVAATGGPGLIGGVIVGVMTAKAIAQVAGKPFIAVNHLEGHALTVRMTAGIDFPYLLLLASGGHCQLLAVEGVGRAKRLGTTIDDAAGEAFDKVAKMLGLGYPGGPAVERAARRGDPRRFRLPRPLLDRPGCDLSFSGLKTAVRQTVEKLPPGPLSEGDIADLCASFQAAVADCLADRCRVAAGIFSARHGRGRPLVVAGGVAANASLRAALTEVARQADMTFVAPPLALCTDNAAMIAWVGVERLRLGLVDTMDFKPRPRWPLDPDAPKAAGAGGVKA.

Fe cation is bound by residues His-120 and His-124. Substrate contacts are provided by residues 142 to 146 (LASGG), Asp-175, Gly-188, and Asn-288. Asp-316 serves as a coordination point for Fe cation. Over residues 342 to 351 (RPRWPLDPDA) the composition is skewed to basic and acidic residues. Positions 342–362 (RPRWPLDPDAPKAAGAGGVKA) are disordered.

Belongs to the KAE1 / TsaD family. Fe(2+) serves as cofactor.

The protein resides in the cytoplasm. It catalyses the reaction L-threonylcarbamoyladenylate + adenosine(37) in tRNA = N(6)-L-threonylcarbamoyladenosine(37) in tRNA + AMP + H(+). Functionally, required for the formation of a threonylcarbamoyl group on adenosine at position 37 (t(6)A37) in tRNAs that read codons beginning with adenine. Is involved in the transfer of the threonylcarbamoyl moiety of threonylcarbamoyl-AMP (TC-AMP) to the N6 group of A37, together with TsaE and TsaB. TsaD likely plays a direct catalytic role in this reaction. This Rhodospirillum rubrum (strain ATCC 11170 / ATH 1.1.1 / DSM 467 / LMG 4362 / NCIMB 8255 / S1) protein is tRNA N6-adenosine threonylcarbamoyltransferase.